We begin with the raw amino-acid sequence, 398 residues long: Protein RecA (398 aa).

83–90 (GPESSGKT) contacts ATP. Positions 351-398 (AGQKNDKKSKLEEKANAGAGISEASEPDSSAEEDFEEFAPIDIGSLGE) are disordered. Residues 354–365 (KNDKKSKLEEKA) are compositionally biased toward basic and acidic residues. Residues 375–389 (SEPDSSAEEDFEEFA) are compositionally biased toward acidic residues.

Belongs to the RecA family.

The protein resides in the cytoplasm. Its function is as follows. Can catalyze the hydrolysis of ATP in the presence of single-stranded DNA, the ATP-dependent uptake of single-stranded DNA by duplex DNA, and the ATP-dependent hybridization of homologous single-stranded DNAs. It interacts with LexA causing its activation and leading to its autocatalytic cleavage. The sequence is that of Protein RecA from Ruminococcus albus (strain ATCC 27210 / DSM 20455 / JCM 14654 / NCDO 2250 / 7).